The following is a 418-amino-acid chain: Gamma-glutamyl phosphate reductase (418 aa).

It belongs to the gamma-glutamyl phosphate reductase family.

The protein localises to the cytoplasm. It catalyses the reaction L-glutamate 5-semialdehyde + phosphate + NADP(+) = L-glutamyl 5-phosphate + NADPH + H(+). Its pathway is amino-acid biosynthesis; L-proline biosynthesis; L-glutamate 5-semialdehyde from L-glutamate: step 2/2. Functionally, catalyzes the NADPH-dependent reduction of L-glutamate 5-phosphate into L-glutamate 5-semialdehyde and phosphate. The product spontaneously undergoes cyclization to form 1-pyrroline-5-carboxylate. The protein is Gamma-glutamyl phosphate reductase of Citrifermentans bemidjiense (strain ATCC BAA-1014 / DSM 16622 / JCM 12645 / Bem) (Geobacter bemidjiensis).